The chain runs to 115 residues: Iron-sulfur cluster insertion protein ErpA (115 aa).

C42, C106, and C108 together coordinate iron-sulfur cluster.

Belongs to the HesB/IscA family. As to quaternary structure, homodimer. The cofactor is iron-sulfur cluster.

In terms of biological role, required for insertion of 4Fe-4S clusters for at least IspG. The sequence is that of Iron-sulfur cluster insertion protein ErpA from Baumannia cicadellinicola subsp. Homalodisca coagulata.